A 338-amino-acid polypeptide reads, in one-letter code: Adenylosuccinate synthetase (338 aa).

GTP is bound by residues 12–18 (GDEGKGK) and 42–44 (GHT). Residue Asp-13 is the Proton acceptor of the active site. Positions 13 and 42 each coordinate Mg(2+). IMP is bound by residues 13-16 (DEGK), 40-43 (NAGH), Thr-127, Arg-141, Gln-179, Thr-194, and Arg-256. Catalysis depends on His-43, which acts as the Proton donor. 252–258 (TVTGRRR) contacts substrate. GTP is bound by residues Arg-258, 284–286 (CLD), and 324–326 (STG).

Belongs to the adenylosuccinate synthetase family. In terms of assembly, homodimer. Mg(2+) is required as a cofactor.

The protein resides in the cytoplasm. It catalyses the reaction IMP + L-aspartate + GTP = N(6)-(1,2-dicarboxyethyl)-AMP + GDP + phosphate + 2 H(+). Its pathway is purine metabolism; AMP biosynthesis via de novo pathway; AMP from IMP: step 1/2. In terms of biological role, plays an important role in the de novo pathway of purine nucleotide biosynthesis. Catalyzes the first committed step in the biosynthesis of AMP from IMP. The protein is Adenylosuccinate synthetase of Methanococcus maripaludis (strain DSM 14266 / JCM 13030 / NBRC 101832 / S2 / LL).